Reading from the N-terminus, the 149-residue chain is Ribosomal RNA large subunit methyltransferase H (149 aa).

S-adenosyl-L-methionine-binding positions include L71, G98, and 117–122 (LSKLTL).

The protein belongs to the RNA methyltransferase RlmH family. As to quaternary structure, homodimer.

It is found in the cytoplasm. The catalysed reaction is pseudouridine(1915) in 23S rRNA + S-adenosyl-L-methionine = N(3)-methylpseudouridine(1915) in 23S rRNA + S-adenosyl-L-homocysteine + H(+). In terms of biological role, specifically methylates the pseudouridine at position 1915 (m3Psi1915) in 23S rRNA. This chain is Ribosomal RNA large subunit methyltransferase H, found in Campylobacter jejuni subsp. jejuni serotype O:6 (strain 81116 / NCTC 11828).